Consider the following 139-residue polypeptide: DNA-directed RNA polymerase II subunit Rpb4 (139 aa).

It belongs to the eukaryotic RPB4 RNA polymerase subunit family. As to quaternary structure, RNA polymerase II consists of 12 different subunits.

The protein resides in the nucleus. The protein localises to the chromosome. Its function is as follows. DNA-dependent RNA polymerase catalyzes the transcription of DNA into RNA using the four ribonucleoside triphosphates as substrates. Associates with POLR2G. The protein is DNA-directed RNA polymerase II subunit Rpb4 of Drosophila melanogaster (Fruit fly).